The chain runs to 408 residues: DNA replication and repair protein RecF (408 aa).

Position 30–37 (30–37 (GSNGQGKT)) interacts with ATP. Disordered regions lie at residues 220-252 (DHGPSARPELSILADDPGEDDVADETGARDGGR) and 389-408 (SPTPASASEPASPGEDGGAA). Over residues 389 to 402 (SPTPASASEPASPG) the composition is skewed to low complexity.

The protein belongs to the RecF family.

It localises to the cytoplasm. Functionally, the RecF protein is involved in DNA metabolism; it is required for DNA replication and normal SOS inducibility. RecF binds preferentially to single-stranded, linear DNA. It also seems to bind ATP. This Clavibacter sepedonicus (Clavibacter michiganensis subsp. sepedonicus) protein is DNA replication and repair protein RecF.